Here is a 152-residue protein sequence, read N- to C-terminus: Fibroblast growth factor 1 (152 aa).

A2 bears the N-acetylalanine mark. Positions 2–15 (AEGEITTFTALTEK) are excised as a propeptide. Heparin is bound at residue N33. A heparin-binding region spans residues 127–143 (KKNGSCKRGPRTHYGQK).

This sequence belongs to the heparin-binding growth factors family. As to quaternary structure, monomer. Homodimer. Interacts with FGFR1, FGFR2, FGFR3 and FGFR4. Affinity between fibroblast growth factors (FGFs) and their receptors is increased by heparan sulfate glycosaminoglycans that function as coreceptors. Found in a complex with FGFBP1, FGF1 and FGF2. Interacts with FGFBP1. Part of a Cu(2+)-dependent multiprotein aggregate containing FGF1, S100A13 and SYT1. Interacts with SYT1. Interacts with S100A13. Interacts with LRRC59. Interacts with CSNKA, CSNKB and FIBP. While binding with LRRC59, CSNKA and FIBP seem mutually exclusive, CSNKB and FIBP may cooperatively interact with FGF1. Forms a ternary complex with FGFR1 and ITGAV:ITGB3 and induces the recruitment of PTPN11 to the complex. In the nucleus, phosphorylated by PKC/PRKCD.

It is found in the secreted. It localises to the cytoplasm. Its subcellular location is the cell cortex. The protein localises to the cytosol. The protein resides in the nucleus. Functionally, plays an important role in the regulation of cell survival, cell division, angiogenesis, cell differentiation and cell migration. Functions as a potent mitogen in vitro. Acts as a ligand for FGFR1 and integrins. Binds to FGFR1 in the presence of heparin leading to FGFR1 dimerization and activation via sequential autophosphorylation on tyrosine residues which act as docking sites for interacting proteins, leading to the activation of several signaling cascades. Binds to integrin ITGAV:ITGB3. Its binding to integrin, subsequent ternary complex formation with integrin and FGFR1, and the recruitment of PTPN11 to the complex are essential for FGF1 signaling. Induces the phosphorylation and activation of FGFR1, FRS2, MAPK3/ERK1, MAPK1/ERK2 and AKT1. Can induce angiogenesis. This is Fibroblast growth factor 1 (FGF1) from Sus scrofa (Pig).